The chain runs to 144 residues: Bacilliredoxin SH1478 (144 aa).

It belongs to the bacilliredoxin family.

This Staphylococcus haemolyticus (strain JCSC1435) protein is Bacilliredoxin SH1478.